Here is a 284-residue protein sequence, read N- to C-terminus: Bifunctional protein FolD (284 aa).

NADP(+) contacts are provided by residues 166–168 (GAS) and I232.

This sequence belongs to the tetrahydrofolate dehydrogenase/cyclohydrolase family. In terms of assembly, homodimer.

The enzyme catalyses (6R)-5,10-methylene-5,6,7,8-tetrahydrofolate + NADP(+) = (6R)-5,10-methenyltetrahydrofolate + NADPH. It catalyses the reaction (6R)-5,10-methenyltetrahydrofolate + H2O = (6R)-10-formyltetrahydrofolate + H(+). It participates in one-carbon metabolism; tetrahydrofolate interconversion. Functionally, catalyzes the oxidation of 5,10-methylenetetrahydrofolate to 5,10-methenyltetrahydrofolate and then the hydrolysis of 5,10-methenyltetrahydrofolate to 10-formyltetrahydrofolate. This Shewanella sp. (strain MR-7) protein is Bifunctional protein FolD.